A 149-amino-acid polypeptide reads, in one-letter code: Large ribosomal subunit protein uL24 (149 aa).

Belongs to the universal ribosomal protein uL24 family. As to quaternary structure, part of the 50S ribosomal subunit.

In terms of biological role, one of two assembly initiator proteins, it binds directly to the 5'-end of the 23S rRNA, where it nucleates assembly of the 50S subunit. Functionally, one of the proteins that surrounds the polypeptide exit tunnel on the outside of the subunit. The chain is Large ribosomal subunit protein uL24 from Nostoc sp. (strain PCC 7120 / SAG 25.82 / UTEX 2576).